Reading from the N-terminus, the 409-residue chain is Pectin acetylesterase 4 (409 aa).

The signal sequence occupies residues 1–32 (MVIRSLLQCRTWSKSDWLLASIGIVLIVYSFS). Asparagine 36 and asparagine 163 each carry an N-linked (GlcNAc...) asparagine glycan. Active-site charge relay system residues include serine 199, aspartate 295, and histidine 362. Residues asparagine 379 and asparagine 406 are each glycosylated (N-linked (GlcNAc...) asparagine).

Belongs to the pectinacetylesterase family.

The protein localises to the secreted. It is found in the cell wall. Its function is as follows. Hydrolyzes acetyl esters in homogalacturonan regions of pectin. In type I primary cell wall, galacturonic acid residues of pectin can be acetylated at the O-2 and O-3 positions. Decreasing the degree of acetylation of pectin gels in vitro alters their physical properties. In Arabidopsis thaliana (Mouse-ear cress), this protein is Pectin acetylesterase 4.